The chain runs to 104 residues: Large ribosomal subunit protein bL21 (104 aa).

The protein belongs to the bacterial ribosomal protein bL21 family. As to quaternary structure, part of the 50S ribosomal subunit. Contacts protein L20.

This protein binds to 23S rRNA in the presence of protein L20. The polypeptide is Large ribosomal subunit protein bL21 (Helicobacter pylori (strain HPAG1)).